The sequence spans 459 residues: Cyclooctat-9-en-7-ol 5-monooxygenase (459 aa).

The tract at residues 1 to 27 (MRERGPVTPAKSSAPPERPWTTGTAPG) is disordered. Position 408 (Cys408) interacts with heme.

This sequence belongs to the cytochrome P450 family. Requires heme as cofactor.

The enzyme catalyses cyclooctat-9-en-7-ol + AH2 + O2 = cyclooctat-9-ene-5,7-diol + A + H2O. Involved in the biosynthesis of cyclooctatin, a potent inhibitor of lysophospholipase. Catalyzes the stereospecific hydroxylation of cyclooctat-9-en-7-ol to form cyclooctat-9-ene-5,7-diol. In Streptomyces melanosporofaciens, this protein is Cyclooctat-9-en-7-ol 5-monooxygenase.